The chain runs to 123 residues: MAEELRRFLYKKLTSVEGLHAIVVSDRDGVPVIKVANENAPEQALRPAFLSTFALATDQGSKLGLSKNKSIICYYSTYQVVQFNQLPLVVSFIASSNANTGLILSLEKELGSLFKELRQAVIS.

It belongs to the LAMTOR3 family. In terms of assembly, part of the Ragulator complex composed of lamtor1, lamtor2, lamtor3, lamtor4 and lamtor5. The Ragulator complex interacts with slc38a9; the probable amino acid sensor. Component of the lysosomal folliculin complex (LFC).

It is found in the late endosome membrane. As part of the Ragulator complex it is involved in amino acid sensing and activation of mTORC1, a signaling complex promoting cell growth in response to growth factors, energy levels, and amino acids. Activated by amino acids through a mechanism involving the lysosomal V-ATPase, the Ragulator plays a dual role for the small GTPases Rag (RagA/RRAGA, RagB/RRAGB, RagC/RRAGC and/or RagD/RRAGD): it (1) acts as a guanine nucleotide exchange factor (GEF), activating the small GTPases Rag and (2) mediates recruitment of Rag GTPases to the lysosome membrane. Activated Ragulator and Rag GTPases function as a scaffold recruiting mTORC1 to lysosomes where it is in turn activated. The sequence is that of Ragulator complex protein LAMTOR3-A (lamtor3-a) from Xenopus laevis (African clawed frog).